The sequence spans 339 residues: Tetraacyldisaccharide 4'-kinase (339 aa).

An ATP-binding site is contributed by 62 to 69; the sequence is VAGGTGKT.

It belongs to the LpxK family.

The catalysed reaction is a lipid A disaccharide + ATP = a lipid IVA + ADP + H(+). The protein operates within glycolipid biosynthesis; lipid IV(A) biosynthesis; lipid IV(A) from (3R)-3-hydroxytetradecanoyl-[acyl-carrier-protein] and UDP-N-acetyl-alpha-D-glucosamine: step 6/6. Its function is as follows. Transfers the gamma-phosphate of ATP to the 4'-position of a tetraacyldisaccharide 1-phosphate intermediate (termed DS-1-P) to form tetraacyldisaccharide 1,4'-bis-phosphate (lipid IVA). The protein is Tetraacyldisaccharide 4'-kinase of Xylella fastidiosa (strain M23).